A 221-amino-acid polypeptide reads, in one-letter code: UPF0502 protein Sputw3181_2381 (221 aa).

This sequence belongs to the UPF0502 family.

This chain is UPF0502 protein Sputw3181_2381, found in Shewanella sp. (strain W3-18-1).